The following is a 157-amino-acid chain: Probable succinate transporter subunit YjjB (157 aa).

4 helical membrane passes run 8-28 (LALM…AMVF), 55-75 (AGFN…SIGI), 87-107 (VFTV…TAMI), and 129-149 (FLKA…PGLW).

Belongs to the ThrE exporter (TC 2.A.79) family. The transporter is composed of YjjB and YjjP.

The protein localises to the cell inner membrane. In terms of biological role, involved in succinate export with YjjP. Both proteins are required for export. This chain is Probable succinate transporter subunit YjjB, found in Salmonella agona (strain SL483).